The primary structure comprises 220 residues: Kinetochore protein Spc25 (220 aa).

A coiled-coil region spans residues 79 to 114 (HLTQEVEAIKLRNLAMKDQIKQQKMLNNQRKNEIME).

This sequence belongs to the SPC25 family. In terms of assembly, component of the Ndc80 complex, which is composed of Ndc80, Nuf2 and Spc25.

The protein resides in the nucleus. The protein localises to the chromosome. Its subcellular location is the centromere. It is found in the kinetochore. In terms of biological role, acts as a component of the essential kinetochore-associated Ndc80 complex, which is required for chromosome segregation and spindle checkpoint activity during meiosis and mitosis. Required for kinetochore integrity and the organization of stable microtubule binding sites in the outer plate of the kinetochore. Participates in SAC signaling that responds specifically to disruptions in spindle microtubule dynamics. The NDC80 complex synergistically enhances the affinity of the SKA1 complex for microtubules and may allow the NDC80 complex to track depolymerizing microtubules. This chain is Kinetochore protein Spc25, found in Drosophila orena (Fruit fly).